We begin with the raw amino-acid sequence, 276 residues long: Undecaprenyl-diphosphatase (276 aa).

The next 5 membrane-spanning stretches (helical) occupy residues 85–105 (MNVVIATVPAVALALLFEKTI), 108–128 (VLFAPVPVAVALVVGGAAILW), 187–207 (VATEFSFFLAIPVIFGATLYE), 217–237 (VDSVGLFAIGLVAAFVSAFAC), and 253–273 (FAWYRIAFGLFVLLVGYSGWI).

Belongs to the UppP family.

It is found in the cell inner membrane. It carries out the reaction di-trans,octa-cis-undecaprenyl diphosphate + H2O = di-trans,octa-cis-undecaprenyl phosphate + phosphate + H(+). In terms of biological role, catalyzes the dephosphorylation of undecaprenyl diphosphate (UPP). Confers resistance to bacitracin. The polypeptide is Undecaprenyl-diphosphatase (Burkholderia mallei (strain NCTC 10247)).